Reading from the N-terminus, the 121-residue chain is Large ribosomal subunit protein bL12 (121 aa).

It belongs to the bacterial ribosomal protein bL12 family. Homodimer. Part of the ribosomal stalk of the 50S ribosomal subunit. Forms a multimeric L10(L12)X complex, where L10 forms an elongated spine to which 2 to 4 L12 dimers bind in a sequential fashion. Binds GTP-bound translation factors.

Its function is as follows. Forms part of the ribosomal stalk which helps the ribosome interact with GTP-bound translation factors. Is thus essential for accurate translation. This Ureaplasma urealyticum serovar 10 (strain ATCC 33699 / Western) protein is Large ribosomal subunit protein bL12.